The chain runs to 103 residues: Translation initiation factor 1A (103 aa).

In terms of domain architecture, S1-like spans Thr-11–Thr-86.

It belongs to the eIF-1A family.

Functionally, seems to be required for maximal rate of protein biosynthesis. Enhances ribosome dissociation into subunits and stabilizes the binding of the initiator Met-tRNA(I) to 40 S ribosomal subunits. This chain is Translation initiation factor 1A (eIF1A), found in Methanococcus maripaludis (strain C5 / ATCC BAA-1333).